A 472-amino-acid polypeptide reads, in one-letter code: Glycine--tRNA ligase (472 aa).

Substrate-binding residues include Arg109 and Glu174. ATP is bound by residues 206 to 208 (RNE), 216 to 221 (FRTREF), 293 to 294 (EL), and 337 to 340 (GLTR). 221 to 225 (FEQME) is a substrate binding site. A substrate-binding site is contributed by 333 to 337 (EPAAG).

Belongs to the class-II aminoacyl-tRNA synthetase family. Homodimer.

It localises to the cytoplasm. The enzyme catalyses tRNA(Gly) + glycine + ATP = glycyl-tRNA(Gly) + AMP + diphosphate. Its function is as follows. Catalyzes the attachment of glycine to tRNA(Gly). This is Glycine--tRNA ligase from Cutibacterium acnes (strain DSM 16379 / KPA171202) (Propionibacterium acnes).